The primary structure comprises 571 residues: Proline--tRNA ligase (571 aa).

This sequence belongs to the class-II aminoacyl-tRNA synthetase family. ProS type 1 subfamily. As to quaternary structure, homodimer.

The protein localises to the cytoplasm. It catalyses the reaction tRNA(Pro) + L-proline + ATP = L-prolyl-tRNA(Pro) + AMP + diphosphate. Functionally, catalyzes the attachment of proline to tRNA(Pro) in a two-step reaction: proline is first activated by ATP to form Pro-AMP and then transferred to the acceptor end of tRNA(Pro). As ProRS can inadvertently accommodate and process non-cognate amino acids such as alanine and cysteine, to avoid such errors it has two additional distinct editing activities against alanine. One activity is designated as 'pretransfer' editing and involves the tRNA(Pro)-independent hydrolysis of activated Ala-AMP. The other activity is designated 'posttransfer' editing and involves deacylation of mischarged Ala-tRNA(Pro). The misacylated Cys-tRNA(Pro) is not edited by ProRS. This chain is Proline--tRNA ligase, found in Pasteurella multocida (strain Pm70).